A 323-amino-acid chain; its full sequence is Acetyl-coenzyme A carboxylase carboxyl transferase subunit alpha (323 aa).

In terms of domain architecture, CoA carboxyltransferase C-terminal spans Leu-40–Thr-293.

It belongs to the AccA family. As to quaternary structure, acetyl-CoA carboxylase is a heterohexamer composed of biotin carboxyl carrier protein (AccB), biotin carboxylase (AccC) and two subunits each of ACCase subunit alpha (AccA) and ACCase subunit beta (AccD).

The protein localises to the cytoplasm. It catalyses the reaction N(6)-carboxybiotinyl-L-lysyl-[protein] + acetyl-CoA = N(6)-biotinyl-L-lysyl-[protein] + malonyl-CoA. It functions in the pathway lipid metabolism; malonyl-CoA biosynthesis; malonyl-CoA from acetyl-CoA: step 1/1. Functionally, component of the acetyl coenzyme A carboxylase (ACC) complex. First, biotin carboxylase catalyzes the carboxylation of biotin on its carrier protein (BCCP) and then the CO(2) group is transferred by the carboxyltransferase to acetyl-CoA to form malonyl-CoA. This chain is Acetyl-coenzyme A carboxylase carboxyl transferase subunit alpha, found in Polynucleobacter asymbioticus (strain DSM 18221 / CIP 109841 / QLW-P1DMWA-1) (Polynucleobacter necessarius subsp. asymbioticus).